A 193-amino-acid polypeptide reads, in one-letter code: Ion-translocating oxidoreductase complex subunit A (193 aa).

A run of 6 helical transmembrane segments spans residues 5–25 (LLLL…FLGL), 39–59 (MGMG…AWAV), 62–82 (FILV…LVIA), 102–122 (LLGI…VALL), 134–154 (AVYG…FAAI), and 171–191 (SIAL…SGLV).

This sequence belongs to the NqrDE/RnfAE family. As to quaternary structure, the complex is composed of six subunits: RnfA, RnfB, RnfC, RnfD, RnfE and RnfG.

The protein resides in the cell inner membrane. Its function is as follows. Part of a membrane-bound complex that couples electron transfer with translocation of ions across the membrane. This is Ion-translocating oxidoreductase complex subunit A from Edwardsiella ictaluri (strain 93-146).